The primary structure comprises 608 residues: Glutamyl-tRNA(Gln) amidotransferase subunit E (608 aa).

The tract at residues 401–428 (PEETRAANPDGTTRFLRPRPGAARMYPE) is disordered.

This sequence belongs to the GatB/GatE family. GatE subfamily. As to quaternary structure, heterodimer of GatD and GatE.

The catalysed reaction is L-glutamyl-tRNA(Gln) + L-glutamine + ATP + H2O = L-glutaminyl-tRNA(Gln) + L-glutamate + ADP + phosphate + H(+). Its function is as follows. Allows the formation of correctly charged Gln-tRNA(Gln) through the transamidation of misacylated Glu-tRNA(Gln) in organisms which lack glutaminyl-tRNA synthetase. The reaction takes place in the presence of glutamine and ATP through an activated gamma-phospho-Glu-tRNA(Gln). The GatDE system is specific for glutamate and does not act on aspartate. The chain is Glutamyl-tRNA(Gln) amidotransferase subunit E from Pyrobaculum arsenaticum (strain DSM 13514 / JCM 11321 / PZ6).